Consider the following 517-residue polypeptide: Methylmalonyl-CoA decarboxylase subunit alpha (517 aa).

A CoA carboxyltransferase N-terminal domain is found at 4–260 (AAKKIQDLQK…NNMEKAPEFG (257 aa)). Positions 271-513 (ELDALMPDNP…REKLPAKKHG (243 aa)) constitute a CoA carboxyltransferase C-terminal domain.

This sequence belongs to the AccD/PCCB family. The methylmalonyl-CoA decarboxylase is composed of four subunits: the carboxyltransferase alpha subunit (MmdA), the tunnel beta subunit (MmdB), the biotin-containing gamma subunit (MmdC) and the delta subunit (MmdD).

Its subcellular location is the cell membrane. It carries out the reaction (S)-methylmalonyl-CoA + Na(+)(in) + H(+)(out) = propanoyl-CoA + Na(+)(out) + CO2. In terms of biological role, carboxyltransferase subunit of the sodium ion pump methylmalonyl-CoA decarboxylase, which converts the chemical energy of a decarboxylation reaction into an electrochemical gradient of Na(+) ions across the cytoplasmic membrane, thereby creating a sodium ion motive force that is used for ATP synthesis. The alpha subunit catalyzes the Na(+)-independent carboxyltransfer from methylmalonyl-CoA to the prosthetic biotin group located on the gamma subunit. The protein is Methylmalonyl-CoA decarboxylase subunit alpha of Propionigenium modestum.